The primary structure comprises 207 residues: Negative modulator of initiation of replication (207 aa).

Residues 43-54 show a composition bias toward polar residues; sequence ATPITSSVTPSA. A disordered region spans residues 43 to 63; sequence ATPITSSVTPSAPRQEAVNDE.

The protein belongs to the SeqA family. Homodimer. Polymerizes to form helical filaments.

The protein localises to the cytoplasm. Its function is as follows. Negative regulator of replication initiation, which contributes to regulation of DNA replication and ensures that replication initiation occurs exactly once per chromosome per cell cycle. Binds to pairs of hemimethylated GATC sequences in the oriC region, thus preventing assembly of replication proteins and re-initiation at newly replicated origins. Repression is relieved when the region becomes fully methylated. This Psychromonas ingrahamii (strain DSM 17664 / CCUG 51855 / 37) protein is Negative modulator of initiation of replication.